Consider the following 152-residue polypeptide: Natriuretic peptides A (152 aa).

Positions 1-24 (MGSFSITKGFFLFLAFWLPGHIGA) are cleaved as a signal peptide. 2 consecutive propeptides follow at residues 25-122 (NPVY…AGPR) and 92-102 (DGGALGRGPWD). Positions 54 to 104 (DEVMPPQALSEQTDEAGAALSSLSEVPPWTGEVNPSQRDGGALGRGPWDPS) are disordered. Serine 128 carries the post-translational modification Phosphoserine. A disulfide bridge connects residues cysteine 129 and cysteine 145. The segment at 146 to 150 (NSFRY) is important for degradation of atrial natriuretic peptide by IDE.

The protein belongs to the natriuretic peptide family. Homodimer; disulfide-linked antiparallel dimer. Post-translationally, the precursor molecule is proteolytically cleaved by CORIN at Arg-122 to produce the atrial natriuretic peptide. Undergoes further proteolytic cleavage by unknown proteases to give rise to long-acting natriuretic peptide, vessel dilator and kaliuretic peptide. Additional processing gives rise to the auriculin and atriopeptin peptides. In the kidneys, alternative processing by an unknown protease results in the peptide urodilatin. Cleavage by MME initiates degradation of the factor and thereby regulates its activity. Degradation by IDE results in reduced activation of NPR1 (in vitro). During IDE degradation, the resulting products can temporarily stimulate NPR2 to produce cGMP, before the fragments are completely degraded and inactivated by IDE (in vitro). In terms of processing, degraded by IDE. Post-translationally, phosphorylation on Ser-128 decreases vasorelaxant activity. In terms of tissue distribution, high levels of expression in the atria compared to the ventricles. Very low levels of expression detected in extracardiac tissues such as the brain, hypothalamus, pituitary, lung and aorta. As to expression, atria (at protein level). High levels of expression in the atria with very low levels of expression in the ventricles (at protein level). Relatively low levels of expression detected in the brain compared to the atria (at protein level).

It is found in the secreted. It localises to the perikaryon. Its subcellular location is the cell projection. Functionally, hormone that plays a key role in mediating cardio-renal homeostasis, and is involved in vascular remodeling and regulating energy metabolism. Acts by specifically binding and stimulating NPR1 to produce cGMP, which in turn activates effector proteins, such as PRKG1, that drive various biological responses. Regulates vasodilation, natriuresis, diuresis and aldosterone synthesis and is therefore essential for regulating blood pressure, controlling the extracellular fluid volume and maintaining the fluid-electrolyte balance. Also involved in inhibiting cardiac remodeling and cardiac hypertrophy by inducing cardiomyocyte apoptosis and attenuating the growth of cardiomyocytes and fibroblasts. Plays a role in female pregnancy by promoting trophoblast invasion and spiral artery remodeling in uterus, and thus prevents pregnancy-induced hypertension. In adipose tissue, acts in various cGMP- and PKG-dependent pathways to regulate lipid metabolism and energy homeostasis. This includes up-regulating lipid metabolism and mitochondrial oxygen utilization by activating the AMP-activated protein kinase (AMPK), and increasing energy expenditure by acting via MAPK11 to promote the UCP1-dependent thermogenesis of brown adipose tissue. Binds the clearance receptor NPR3 which removes the hormone from circulation. In terms of biological role, may have a role in cardio-renal homeostasis through regulation of natriuresis, diuresis, vasodilation, and inhibiting aldosterone synthesis. In vitro, promotes the production of cGMP and induces vasodilation. May promote natriuresis, at least in part, by enhancing prostaglandin E2 synthesis resulting in the inhibition of renal Na+-K+-ATPase. However reports on the involvement of this peptide in mammal blood volume and blood pressure homeostasis are conflicting; according to a report, in vivo it is not sufficient to activate cGMP and does not inhibit collecting duct transport nor effect diuresis and natriuresis. Appears to bind to specific receptors that are distinct from the receptors bound by atrial natriuretic peptide and vessel dilator. Possibly enhances protein excretion in urine by decreasing proximal tubular protein reabsorption. Its function is as follows. May have a role in cardio-renal homeostasis through regulation of natriuresis, diuresis, and vasodilation. In vitro, promotes the production of cGMP and induces vasodilation. May promote natriuresis, at least in part, by enhancing prostaglandin E2 synthesis resulting in the inhibition of renal Na+-K+-ATPase. However reports on the involvement of this peptide in mammal blood volume and blood pressure homeostasis are conflicting; according to a report, in vivo it is not sufficient to activate cGMP and does not inhibit collecting duct transport nor effect diuresis and natriuresis. Appears to bind to specific receptors that are distinct from the receptors bound by the atrial natriuretic and long-acting natriuretic peptides. Possibly functions in protein excretion in urine by maintaining the integrity of the proximal tubules and enhancing protein excretion by decreasing proximal tubular protein reabsorption. May have a role in cardio-renal homeostasis through regulation of diuresis and inhibiting aldosterone synthesis. In vitro, promotes the production of cGMP and induces vasodilation. May promote natriuresis, at least in part, by enhancing prostaglandin E2 synthesis resulting in the inhibition of renal Na+-K+-ATPase. May have a role in potassium excretion but not sodium excretion (natriuresis). Possibly enhances protein excretion in urine by decreasing proximal tubular protein reabsorption. Functionally, hormone produced in the kidneys that appears to be important for maintaining cardio-renal homeostasis. Mediates vasodilation, natriuresis and diuresis primarily in the renal system, in order to maintain the extracellular fluid volume and control the fluid-electrolyte balance. Specifically binds and stimulates cGMP production by renal transmembrane receptors, likely NPR1. Urodilatin not ANP, may be the natriuretic peptide responsible for the regulation of sodium and water homeostasis in the kidney. In terms of biological role, may have a role in cardio-renal homeostasis through regulation of natriuresis and vasodilation. In vivo promotes natriuresis and in vitro, vasodilates renal artery strips. Its function is as follows. May have a role in cardio-renal homeostasis through regulation of regulation of natriuresis and vasodilation. In vivo promotes natriuresis. In vitro, vasodilates intestinal smooth muscle but not smooth muscle strips. May have a role in cardio-renal homeostasis through regulation of natriuresis and vasodilation. In vivo promotes natriuresis. In vitro, selectively vasodilates intestinal and vascular smooth muscle strips. Functionally, may have a role in cardio-renal homeostasis through regulation of natriuresis and vasodilation. In vivo promotes natriuresis. In vitro, selectively vasodilates intestinal smooth muscle but not vascular smooth muscle strips. The protein is Natriuretic peptides A (Nppa) of Rattus norvegicus (Rat).